The chain runs to 431 residues: Cyclic GMP-AMP synthase-like receptor (431 aa).

ATP-binding positions include Ser-73 and 85 to 87 (EFD). Positions 85, 87, and 212 each coordinate Mg(2+). Residue Asp-212 coordinates GTP. ATP contacts are provided by residues Lys-290 and 304–308 (SYALK). Glu-316 is a binding site for Mn(2+).

Belongs to the mab-21 family. Requires Mg(2+) as cofactor. Mn(2+) is required as a cofactor.

The enzyme catalyses GTP + ATP = 2',3'-cGAMP + 2 diphosphate. It carries out the reaction GTP + ATP = pppGp(2'-5')A + diphosphate. It catalyses the reaction pppGp(2'-5')A = 2',3'-cGAMP + diphosphate. Functionally, nucleotidyltransferase that catalyzes the formation of cyclic GMP-AMP (2',3'-cGAMP) from ATP and GTP and plays a key role in innate immunity. Acts as a key sensor of double-stranded RNA (dsRNA), the presence of dsRNA in the cytoplasm being a danger signal that triggers the immune responses. Directly binds dsRNA, activating the nucleotidyltransferase activity, leading to synthesis of 2',3'-cGAMP, a second messenger that binds to and activates Sting, thereby triggering the immune response via activation of the NF-kappa-B transcription factor. The chain is Cyclic GMP-AMP synthase-like receptor from Frankliniella occidentalis (Western flower thrips).